The primary structure comprises 83 residues: MQNDAGEFVDLYCPRKCSASNRLIHAKDHASVQLVIADVDPATGRAADTSKMYVVCGAIRRMGESDDCIVRLTKKDGILAKNY.

This sequence belongs to the eukaryotic ribosomal protein eS21 family. As to quaternary structure, component of the 40S small ribosomal subunit.

It localises to the cytoplasm. It is found in the cytosol. The protein localises to the rough endoplasmic reticulum. This chain is Small ribosomal subunit protein eS21 (RpS21), found in Spodoptera frugiperda (Fall armyworm).